The primary structure comprises 471 residues: 3-isopropylmalate dehydratase large subunit (471 aa).

3 residues coordinate [4Fe-4S] cluster: Cys349, Cys410, and Cys413.

It belongs to the aconitase/IPM isomerase family. LeuC type 1 subfamily. In terms of assembly, heterodimer of LeuC and LeuD. It depends on [4Fe-4S] cluster as a cofactor.

The catalysed reaction is (2R,3S)-3-isopropylmalate = (2S)-2-isopropylmalate. It functions in the pathway amino-acid biosynthesis; L-leucine biosynthesis; L-leucine from 3-methyl-2-oxobutanoate: step 2/4. Catalyzes the isomerization between 2-isopropylmalate and 3-isopropylmalate, via the formation of 2-isopropylmaleate. This chain is 3-isopropylmalate dehydratase large subunit, found in Chromobacterium violaceum (strain ATCC 12472 / DSM 30191 / JCM 1249 / CCUG 213 / NBRC 12614 / NCIMB 9131 / NCTC 9757 / MK).